Reading from the N-terminus, the 213-residue chain is Outer envelope pore protein 24B, chloroplastic (213 aa).

The Cytoplasmic segment spans residues M1–M3. A beta stranded membrane pass occupies residues K4–T13. At D14–G18 the chain is on the chloroplast intermembrane side. A beta stranded membrane pass occupies residues I19–D28. The Cytoplasmic segment spans residues I29 to R32. A beta stranded transmembrane segment spans residues A33 to A42. At G43–K55 the chain is on the chloroplast intermembrane side. The beta stranded transmembrane segment at P56–N64 threads the bilayer. At V65–V70 the chain is on the cytoplasmic side. The beta stranded transmembrane segment at R71–I80 threads the bilayer. Over A81 to R93 the chain is Chloroplast intermembrane. Residues A94–S103 form a beta stranded membrane-spanning segment. At L104–S108 the chain is on the cytoplasmic side. A beta stranded membrane pass occupies residues A109–V118. Topologically, residues G119–N122 are chloroplast intermembrane. A beta stranded membrane pass occupies residues C123–G132. Topologically, residues G133–A144 are cytoplasmic. Residues K145–F156 form a beta stranded membrane-spanning segment. Residues Y157–G159 lie on the Chloroplast intermembrane side of the membrane. Residues D160–T168 traverse the membrane as a beta stranded segment. At S169–S170 the chain is on the cytoplasmic side. The beta stranded transmembrane segment at K171–R179 threads the bilayer. The Chloroplast intermembrane segment spans residues N180–P201. Residues K202–L211 traverse the membrane as a beta stranded segment. Topologically, residues E212 to M213 are cytoplasmic.

Belongs to the plastid outer envelope porin OEP24 (TC 1.B.28) family. Homooligomers form large rather nonselective pores in plastidial outer membranes.

Its subcellular location is the plastid. It is found in the etioplast membrane. It localises to the chloroplast outer membrane. Functionally, high-conductance voltage-dependent solute channel with a slight selectivity for cations transporting triosephosphates, dicarboxylic acids, ATP, inorganic phosphate (Pi), sugars, and positively or negatively charged amino acids. The polypeptide is Outer envelope pore protein 24B, chloroplastic (OEP24B) (Arabidopsis thaliana (Mouse-ear cress)).